We begin with the raw amino-acid sequence, 277 residues long: Phosphatidylserine decarboxylase proenzyme (277 aa).

Active-site charge relay system; for autoendoproteolytic cleavage activity residues include Asp88, His144, and Ser242. Ser242 functions as the Schiff-base intermediate with substrate; via pyruvic acid; for decarboxylase activity in the catalytic mechanism. Ser242 carries the post-translational modification Pyruvic acid (Ser); by autocatalysis.

Belongs to the phosphatidylserine decarboxylase family. PSD-B subfamily. Prokaryotic type I sub-subfamily. In terms of assembly, heterodimer of a large membrane-associated beta subunit and a small pyruvoyl-containing alpha subunit. Pyruvate is required as a cofactor. Post-translationally, is synthesized initially as an inactive proenzyme. Formation of the active enzyme involves a self-maturation process in which the active site pyruvoyl group is generated from an internal serine residue via an autocatalytic post-translational modification. Two non-identical subunits are generated from the proenzyme in this reaction, and the pyruvate is formed at the N-terminus of the alpha chain, which is derived from the carboxyl end of the proenzyme. The autoendoproteolytic cleavage occurs by a canonical serine protease mechanism, in which the side chain hydroxyl group of the serine supplies its oxygen atom to form the C-terminus of the beta chain, while the remainder of the serine residue undergoes an oxidative deamination to produce ammonia and the pyruvoyl prosthetic group on the alpha chain. During this reaction, the Ser that is part of the protease active site of the proenzyme becomes the pyruvoyl prosthetic group, which constitutes an essential element of the active site of the mature decarboxylase.

Its subcellular location is the cell membrane. The enzyme catalyses a 1,2-diacyl-sn-glycero-3-phospho-L-serine + H(+) = a 1,2-diacyl-sn-glycero-3-phosphoethanolamine + CO2. It participates in phospholipid metabolism; phosphatidylethanolamine biosynthesis; phosphatidylethanolamine from CDP-diacylglycerol: step 2/2. Catalyzes the formation of phosphatidylethanolamine (PtdEtn) from phosphatidylserine (PtdSer). This Psychrobacter cryohalolentis (strain ATCC BAA-1226 / DSM 17306 / VKM B-2378 / K5) protein is Phosphatidylserine decarboxylase proenzyme.